Reading from the N-terminus, the 593-residue chain is Arylsulfatase D (593 aa).

Residues 1-33 form the signal peptide; it reads MRSAARRGRAAPAARDSLPVLLFLCLLLKTCEP. Asp-49 and Asp-50 together coordinate Ca(2+). Asn-61 carries an N-linked (GlcNAc...) asparagine glycan. Cys-89 serves as a coordination point for Ca(2+). The active-site Nucleophile is Cys-89. Cys-89 carries the post-translational modification 3-oxoalanine (Cys). Asn-128 is a glycosylation site (N-linked (GlcNAc...) asparagine). Position 148 (Lys-148) interacts with substrate. The active site involves His-150. A substrate-binding site is contributed by His-304. N-linked (GlcNAc...) asparagine glycosylation occurs at Asn-347. Ca(2+)-binding residues include Asp-356 and His-357. A substrate-binding site is contributed by Lys-381.

This sequence belongs to the sulfatase family. It depends on Ca(2+) as a cofactor. Post-translationally, the conversion to 3-oxoalanine (also known as C-formylglycine, FGly), of a serine or cysteine residue in prokaryotes and of a cysteine residue in eukaryotes, is critical for catalytic activity. In terms of tissue distribution, expressed in the pancreas, kidney, liver, lung, placenta, brain and heart.

It is found in the lysosome. This chain is Arylsulfatase D (ARSD), found in Homo sapiens (Human).